The chain runs to 674 residues: Regulator of G-protein signaling 9 (674 aa).

The DEP domain maps to 30–105; sequence PETGVRMQNQ…PDGSLYRFQT (76 aa). The region spanning 219–280 is the G protein gamma domain; sequence KQTVVAVKKE…NPWITDDTQF (62 aa). Residues 298-413 enclose the RGS domain; it reads RWAFNFSELI…YARYLKSPIY (116 aa). The interval 533–573 is disordered; the sequence is SSGLEQKGECSGSMAPRGPSVTESSEASLDTSWPRSRPRAP. The segment covering 553–565 has biased composition (polar residues); sequence VTESSEASLDTSW.

As to quaternary structure, heterodimer with GNB5. Interacts with RGS7BP, leading to regulate the subcellular location of the heterodimer formed with GNB5. Component of the RGS9-1-Gbeta5 complex composed of RGS9 (RGS9-1), Gbeta5 (GNB5) and RGS9BP. Interacts with PDE6G and GNAT1. Post-translationally, retinal isoform 3 is light-dependent phosphorylated at 'Ser-478'. Phosphorylation is decreased by light exposition. In terms of tissue distribution, highly expressed in the caudate and putamen, lower levels found in the hypothalamus and nucleus accumbens and very low levels in cerebellum. Not expressed in globus pallidus or cingulate cortex. Isoform 2 is expressed predominantly in pineal gland and retina. Isoform 3 is expressed in retina (abundant in photoreceptors).

It is found in the membrane. Its function is as follows. Inhibits signal transduction by increasing the GTPase activity of G protein alpha subunits thereby driving them into their inactive GDP-bound form. Binds to GNAT1. Involved in phototransduction; key element in the recovery phase of visual transduction. This chain is Regulator of G-protein signaling 9 (RGS9), found in Homo sapiens (Human).